A 98-amino-acid chain; its full sequence is Co-chaperonin GroES (98 aa).

This sequence belongs to the GroES chaperonin family. As to quaternary structure, heptamer of 7 subunits arranged in a ring. Interacts with the chaperonin GroEL.

It localises to the cytoplasm. Its function is as follows. Together with the chaperonin GroEL, plays an essential role in assisting protein folding. The GroEL-GroES system forms a nano-cage that allows encapsulation of the non-native substrate proteins and provides a physical environment optimized to promote and accelerate protein folding. GroES binds to the apical surface of the GroEL ring, thereby capping the opening of the GroEL channel. The sequence is that of Co-chaperonin GroES from Beutenbergia cavernae (strain ATCC BAA-8 / DSM 12333 / CCUG 43141 / JCM 11478 / NBRC 16432 / NCIMB 13614 / HKI 0122).